The chain runs to 267 residues: MASSEETPRSLAGKVALVTGAGRGIGKGIALELAKRGASLVINYNSAEKPAQEVVDEIAKTGSRAVAIKADITKVPEVSRLFQEALQHFGHLDIVVSNSGTEVFKPEEEVTEEDYDRVFNLNTRAQFFIAQHAYVHLRNGGRIVLMSSVAANMSGIPNHALYAGSKAAVEGFTRSFAVDAGHKKITVNAIAPGGVKTDMYDANAWHYVPNGKPGMPMEEIDKGLAAFCPLGRVAVPQDIGRVVAFLAHPDSEWVNGQVILLTGGSVT.

Residues I25, N45, D71, and N98 each coordinate NADP(+). Residues S147 and S148 each act as proton donor in the active site. 4 residues coordinate NADP(+): Y162, K166, V195, and T197. Residue Y162 is the Proton acceptor of the active site. K166 (lowers pKa of active site Tyr) is an active-site residue.

This sequence belongs to the short-chain dehydrogenases/reductases (SDR) family.

Functionally, hydroxynaphthalene reductase-like protein; part of the Pks2 gene cluster that mediates the formation of infectious structures (appressoria), enabling these fungi to kill insects faster. The product of the Pks2 gene cluster is different from the one of Pks1 and has still not been identified. This chain is Hydroxynaphthalene reductase-like protein Arp2, found in Metarhizium anisopliae (strain ARSEF 549).